The following is a 229-amino-acid chain: Large ribosomal subunit protein uL1 (229 aa).

Belongs to the universal ribosomal protein uL1 family. In terms of assembly, part of the 50S ribosomal subunit.

In terms of biological role, binds directly to 23S rRNA. The L1 stalk is quite mobile in the ribosome, and is involved in E site tRNA release. Protein L1 is also a translational repressor protein, it controls the translation of the L11 operon by binding to its mRNA. The polypeptide is Large ribosomal subunit protein uL1 (Chlorobium luteolum (strain DSM 273 / BCRC 81028 / 2530) (Pelodictyon luteolum)).